The primary structure comprises 476 residues: Probable serine carboxypeptidase CPVL (476 aa).

Residues 1–22 (MVGTMWKVIVSLVLLMPGSCDG) form the signal peptide. N-linked (GlcNAc...) asparagine glycans are attached at residues Asn81 and Asn132. The active site involves Ser204. Asn307 and Asn346 each carry an N-linked (GlcNAc...) asparagine glycan. Catalysis depends on residues Asp388 and His448.

The protein belongs to the peptidase S10 family.

Functionally, may be involved in the digestion of phagocytosed particles in the lysosome, participation in an inflammatory protease cascade, and trimming of peptides for antigen presentation. This is Probable serine carboxypeptidase CPVL (CPVL) from Pongo abelii (Sumatran orangutan).